Here is a 215-residue protein sequence, read N- to C-terminus: MLEELLNGNIEKKTITQIYGPPGVGKTNICILSMLNAIENGKSVVYIDTEGSLSIERIKQLSGKNCEELLKNIIIYEPSTFEEQSEALEKIFLLENIGLIIIDGIVSLYRLELCDNINENTKLNRMLGKQISNLLKVARKKNSGILITNQVKDSANGIEPAGGRLLEYWSKSIIKLEKAESVRKLTLEKHRHAKEGENLRFRILQNGLEIINKSY.

It belongs to the eukaryotic RecA-like protein family. RadB subfamily.

Its function is as follows. Involved in DNA repair and in homologous recombination. May regulate the cleavage reactions of the branch-structured DNA. Has a very weak ATPase activity that is not stimulated by DNA. Binds DNA but does not promote DNA strands exchange. In Methanococcus maripaludis (strain C7 / ATCC BAA-1331), this protein is DNA repair and recombination protein RadB.